The sequence spans 490 residues: Endoglucanase 13 (490 aa).

The first 26 residues, 1 to 26, serve as a signal peptide directing secretion; it reads MSQLKNGSSQCLWTSICIVLIVMSMA. N-linked (GlcNAc...) asparagine glycosylation is present at Asn-6. Asp-86 serves as the catalytic Nucleophile. Residues His-412, Asp-464, and Glu-473 contribute to the active site.

This sequence belongs to the glycosyl hydrolase 9 (cellulase E) family.

Its subcellular location is the secreted. It carries out the reaction Endohydrolysis of (1-&gt;4)-beta-D-glucosidic linkages in cellulose, lichenin and cereal beta-D-glucans.. This chain is Endoglucanase 13, found in Arabidopsis thaliana (Mouse-ear cress).